We begin with the raw amino-acid sequence, 171 residues long: 3-hydroxydecanoyl-[acyl-carrier-protein] dehydratase (171 aa).

Histidine 70 is a catalytic residue.

The protein belongs to the thioester dehydratase family. FabA subfamily. As to quaternary structure, homodimer.

Its subcellular location is the cytoplasm. The catalysed reaction is a (3R)-hydroxyacyl-[ACP] = a (2E)-enoyl-[ACP] + H2O. It catalyses the reaction (3R)-hydroxydecanoyl-[ACP] = (2E)-decenoyl-[ACP] + H2O. It carries out the reaction (2E)-decenoyl-[ACP] = (3Z)-decenoyl-[ACP]. It participates in lipid metabolism; fatty acid biosynthesis. Functionally, necessary for the introduction of cis unsaturation into fatty acids. Catalyzes the dehydration of (3R)-3-hydroxydecanoyl-ACP to E-(2)-decenoyl-ACP and then its isomerization to Z-(3)-decenoyl-ACP. Can catalyze the dehydratase reaction for beta-hydroxyacyl-ACPs with saturated chain lengths up to 16:0, being most active on intermediate chain length. The chain is 3-hydroxydecanoyl-[acyl-carrier-protein] dehydratase from Xanthomonas euvesicatoria pv. vesicatoria (strain 85-10) (Xanthomonas campestris pv. vesicatoria).